Reading from the N-terminus, the 282-residue chain is Protein OS-9 homolog (282 aa).

The first 23 residues, 1–23 (MRITQILLCLVIVALSSSSHVWS), serve as a signal peptide directing secretion. A glycan (N-linked (GlcNAc...) asparagine) is linked at Asn-94. Residues 120 to 239 (EKCLFRQEGW…TVQCPTLCKH (120 aa)) form the MRH domain. Cysteines 122 and 135 form a disulfide. Trp-129, Trp-130, and Gln-142 together coordinate a mannooligosaccharide derivative. N-linked (GlcNAc...) asparagine glycosylation is found at Asn-169 and Asn-190. 2 cysteine pairs are disulfide-bonded: Cys-194-Cys-225 and Cys-209-Cys-237. The a mannooligosaccharide derivative site is built by Asp-195, Arg-201, Glu-221, and Tyr-227. Positions 262–276 (DATRNKEEQAVDESP) are enriched in basic and acidic residues. A disordered region spans residues 262–282 (DATRNKEEQAVDESPKMIADS).

This sequence belongs to the OS-9 family. In terms of assembly, interacts with HRD3A.

Its subcellular location is the endoplasmic reticulum. Lectin which functions in endoplasmic reticulum (ER) quality control and ER-associated degradation (ERAD). May bind terminally misfolded non-glycosylated proteins as well as improperly folded glycoproteins, retain them in the ER, and possibly transfer them to the ubiquitination machinery and promote their degradation. Targets the misfolded LRR receptor kinase BRI1 and the misfolded receptor-like kinase EFR. This Arabidopsis thaliana (Mouse-ear cress) protein is Protein OS-9 homolog.